The following is a 213-amino-acid chain: Protein SRN2 (213 aa).

Residues 128–213 enclose the VPS37 C-terminal domain; it reads SKYVASWQDY…TWDKQGNLKY (86 aa).

Belongs to the VPS37 family. As to quaternary structure, component of the ESCRT-I complex (endosomal sorting complex required for transport I) which consists of STP22, VPS28, SRN2 and MVB12 in a 1:1:1:1 stoichiometry. Interacts with STP22 and MVB12.

The protein resides in the cytoplasm. It localises to the endosome. The protein localises to the late endosome membrane. Component of the ESCRT-I complex, a regulator of vesicular trafficking process. Required for normal endocytic and biosynthetic traffic to the yeast vacuole. The chain is Protein SRN2 (SRN2) from Saccharomyces cerevisiae (strain ATCC 204508 / S288c) (Baker's yeast).